The primary structure comprises 385 residues: Acetate kinase (385 aa).

N9 lines the Mg(2+) pocket. K16 provides a ligand contact to ATP. R87 lines the substrate pocket. D144 serves as the catalytic Proton donor/acceptor. Residues 202–206 and 277–279 contribute to the ATP site; these read HLGSG and DMR. E373 is a Mg(2+) binding site.

Belongs to the acetokinase family. In terms of assembly, homodimer. Mg(2+) serves as cofactor. Requires Mn(2+) as cofactor.

It localises to the cytoplasm. It catalyses the reaction acetate + ATP = acetyl phosphate + ADP. The protein operates within metabolic intermediate biosynthesis; acetyl-CoA biosynthesis; acetyl-CoA from acetate: step 1/2. Functionally, catalyzes the formation of acetyl phosphate from acetate and ATP. Can also catalyze the reverse reaction. This Rickettsia typhi (strain ATCC VR-144 / Wilmington) protein is Acetate kinase.